Reading from the N-terminus, the 251-residue chain is tRNA1(Val) (adenine(37)-N6)-methyltransferase (251 aa).

Belongs to the methyltransferase superfamily. tRNA (adenine-N(6)-)-methyltransferase family.

The protein localises to the cytoplasm. It catalyses the reaction adenosine(37) in tRNA1(Val) + S-adenosyl-L-methionine = N(6)-methyladenosine(37) in tRNA1(Val) + S-adenosyl-L-homocysteine + H(+). Its function is as follows. Specifically methylates the adenine in position 37 of tRNA(1)(Val) (anticodon cmo5UAC). This Yersinia enterocolitica serotype O:8 / biotype 1B (strain NCTC 13174 / 8081) protein is tRNA1(Val) (adenine(37)-N6)-methyltransferase.